Consider the following 428-residue polypeptide: MSKSDQLFEQARQTIPGGVNSPVRAFNGVGGTPRFIDHADGAYLYDVDGQAYVDYIGSWGPMLLGHNHPAIKAAVIKAVEKGLSYGAPTEIEVLMAEKVRQIVPSMEQVRMVNSGTEATMSAIRLARGYTGRDKIVKFEGCYHGHADSLLVKAGSGALTLGQPNSPGVPADFAKHTLTCVFNDLDSVCEAFTQYGSEIACIIVEPVAGNMNCIPPVPGFLEGLRAICDEAGALLILDEVMTGFRVSLRGAQGHYNIDPDLTTLGKIIGAGMPVGAFGGKKKVMQHIAPTGPVYQAGTLSGNPVAMAAGLTMLDLLLEPGLYEQLSAKTARVAEGLKAAAAKHGIPLAINYVGGMFGFFFTDEPEVTRYEQVTRCDMERFKRFYHLMLEEGVYLAPSAYEAGFLSLAHGDKEIEHTLAAAERSFAKLAG.

N6-(pyridoxal phosphate)lysine is present on Lys265.

The protein belongs to the class-III pyridoxal-phosphate-dependent aminotransferase family. HemL subfamily. As to quaternary structure, homodimer. Requires pyridoxal 5'-phosphate as cofactor.

Its subcellular location is the cytoplasm. It carries out the reaction (S)-4-amino-5-oxopentanoate = 5-aminolevulinate. Its pathway is porphyrin-containing compound metabolism; protoporphyrin-IX biosynthesis; 5-aminolevulinate from L-glutamyl-tRNA(Glu): step 2/2. This is Glutamate-1-semialdehyde 2,1-aminomutase from Aeromonas hydrophila subsp. hydrophila (strain ATCC 7966 / DSM 30187 / BCRC 13018 / CCUG 14551 / JCM 1027 / KCTC 2358 / NCIMB 9240 / NCTC 8049).